Consider the following 742-residue polypeptide: Photosystem I P700 chlorophyll a apoprotein A2 (742 aa).

The next 8 membrane-spanning stretches (helical) occupy residues 46 to 69 (LFST…FHIA), 135 to 158 (LFQG…LHLQ), 175 to 199 (LNHH…HVAI), 273 to 291 (IAHH…GHMY), 336 to 359 (LHFQ…QHMG), 375 to 401 (SALY…IFFV), 423 to 445 (ALIS…IYVH), and 525 to 543 (FLVH…LILI). 2 residues coordinate [4Fe-4S] cluster: Cys-567 and Cys-576. The next 2 helical transmembrane spans lie at 583–604 (ATYL…YWHW) and 651–673 (LSPW…MFLI). Residues His-662, Met-670, and Tyr-678 each contribute to the divinyl chlorophyll a site. Trp-679 lines the phylloquinone pocket. The chain crosses the membrane as a helical span at residues 715–735 (LVGLTHFTVGNFVTFGAFVIA).

Belongs to the PsaA/PsaB family. The PsaA/B heterodimer binds the P700 divinyl chlorophyll special pair and subsequent electron acceptors. PSI consists of a core antenna complex that captures photons, and an electron transfer chain that converts photonic excitation into a charge separation. The cyanobacterial PSI reaction center is composed of one copy each of PsaA,B,C,D,E,F,I,J,K,L,M and X, and forms trimeric complexes. Requires PSI electron transfer chain: 5 divinyl chlorophyll a, 1 divinyl chlorophyll a', 2 phylloquinones and 3 4Fe-4S clusters. PSI core antenna: 90 divinyl chlorophyll a, 22 carotenoids, 3 phospholipids and 1 galactolipid. P700 is a divinyl chlorophyll a/divinyl chlorophyll a' dimer, A0 is one or more divinyl chlorophyll a, A1 is one or both phylloquinones and FX is a shared 4Fe-4S iron-sulfur center. as cofactor.

It localises to the cellular thylakoid membrane. The catalysed reaction is reduced [plastocyanin] + hnu + oxidized [2Fe-2S]-[ferredoxin] = oxidized [plastocyanin] + reduced [2Fe-2S]-[ferredoxin]. PsaA and PsaB bind P700, the primary electron donor of photosystem I (PSI), as well as the electron acceptors A0, A1 and FX. PSI is a plastocyanin/cytochrome c6-ferredoxin oxidoreductase, converting photonic excitation into a charge separation, which transfers an electron from the donor P700 chlorophyll pair to the spectroscopically characterized acceptors A0, A1, FX, FA and FB in turn. Oxidized P700 is reduced on the lumenal side of the thylakoid membrane by plastocyanin or cytochrome c6. The chain is Photosystem I P700 chlorophyll a apoprotein A2 from Prochlorococcus marinus (strain NATL2A).